The following is a 346-amino-acid chain: Cyclin-dependent kinase 20 (346 aa).

A Protein kinase domain is found at 4–288 (YCILGRIGEG…ASKALLHQYF (285 aa)). ATP contacts are provided by residues 10–18 (IGEGAHGIV) and Lys33. Asp127 (proton acceptor) is an active-site residue.

Belongs to the protein kinase superfamily. CMGC Ser/Thr protein kinase family. CDC2/CDKX subfamily. As to quaternary structure, monomer. Interacts with TBC1D32. Interacts with MAK.

The protein resides in the nucleus. It localises to the cytoplasm. Its subcellular location is the cell projection. The protein localises to the cilium. The enzyme catalyses L-seryl-[protein] + ATP = O-phospho-L-seryl-[protein] + ADP + H(+). The catalysed reaction is L-threonyl-[protein] + ATP = O-phospho-L-threonyl-[protein] + ADP + H(+). Functionally, required for high-level Shh responses in the developing neural tube. Together with TBC1D32, controls the structure of the primary cilium by coordinating assembly of the ciliary membrane and axoneme, allowing GLI2 to be properly activated in response to SHH signaling. Involved in cell growth. Activates CDK2, a kinase involved in the control of the cell cycle, by phosphorylating residue 'Thr-160'. The sequence is that of Cyclin-dependent kinase 20 (CDK20) from Homo sapiens (Human).